Here is a 355-residue protein sequence, read N- to C-terminus: NADH dehydrogenase [ubiquinone] 1 alpha subcomplex subunit 10, mitochondrial (355 aa).

The transit peptide at 1-35 (MALRLLRLVPASAPARGLAAGAQRVGRIHTSVHCK) directs the protein to the mitochondrion. Position 122 is an N6-acetyllysine; alternate (Lys-122). An N6-succinyllysine; alternate modification is found at Lys-122. A Phosphoserine; by PINK1 modification is found at Ser-250. At Lys-285 the chain carries N6-succinyllysine.

Belongs to the complex I NDUFA10 subunit family. Complex I is composed of 45 different subunits. This a component of the hydrophobic protein fraction. The cofactor is FAD. In terms of processing, phosphorylation at Ser-250 by PINK1 is required for the binding and/or reduction of the complex I substrate ubiquinone. Post-translationally, acetylation of Lys-242 is observed in liver mitochondria from fasted mice but not from fed mice.

It localises to the mitochondrion matrix. Its function is as follows. Accessory subunit of the mitochondrial membrane respiratory chain NADH dehydrogenase (Complex I), that is believed not to be involved in catalysis. Complex I functions in the transfer of electrons from NADH to the respiratory chain. The immediate electron acceptor for the enzyme is believed to be ubiquinone. This Mus musculus (Mouse) protein is NADH dehydrogenase [ubiquinone] 1 alpha subcomplex subunit 10, mitochondrial (Ndufa10).